Reading from the N-terminus, the 227-residue chain is Enolase-phosphatase E1 (227 aa).

Belongs to the HAD-like hydrolase superfamily. MasA/MtnC family. In terms of assembly, monomer. It depends on Mg(2+) as a cofactor.

The enzyme catalyses 5-methylsulfanyl-2,3-dioxopentyl phosphate + H2O = 1,2-dihydroxy-5-(methylsulfanyl)pent-1-en-3-one + phosphate. It functions in the pathway amino-acid biosynthesis; L-methionine biosynthesis via salvage pathway; L-methionine from S-methyl-5-thio-alpha-D-ribose 1-phosphate: step 3/6. Its pathway is amino-acid biosynthesis; L-methionine biosynthesis via salvage pathway; L-methionine from S-methyl-5-thio-alpha-D-ribose 1-phosphate: step 4/6. Its function is as follows. Bifunctional enzyme that catalyzes the enolization of 2,3-diketo-5-methylthiopentyl-1-phosphate (DK-MTP-1-P) into the intermediate 2-hydroxy-3-keto-5-methylthiopentenyl-1-phosphate (HK-MTPenyl-1-P), which is then dephosphorylated to form the acireductone 1,2-dihydroxy-3-keto-5-methylthiopentene (DHK-MTPene). The sequence is that of Enolase-phosphatase E1 from Methylococcus capsulatus (strain ATCC 33009 / NCIMB 11132 / Bath).